The following is a 325-amino-acid chain: Bifunctional ligase/repressor BirA (325 aa).

The segment at residues 23-42 is a DNA-binding region (H-T-H motif); the sequence is GQKISDALGCSRTAVWKHIE. The BPL/LPL catalytic domain occupies 74 to 262; the sequence is RFGLKTEVMG…CFEKRYRDYM (189 aa). Residues Q118, 122-124, and K189 each bind biotin; that span reads RGR.

The protein belongs to the biotin--protein ligase family.

The enzyme catalyses biotin + L-lysyl-[protein] + ATP = N(6)-biotinyl-L-lysyl-[protein] + AMP + diphosphate + H(+). Functionally, acts both as a biotin--[acetyl-CoA-carboxylase] ligase and a repressor. This is Bifunctional ligase/repressor BirA from Bacillus spizizenii (strain ATCC 23059 / NRRL B-14472 / W23) (Bacillus subtilis subsp. spizizenii).